Here is a 344-residue protein sequence, read N- to C-terminus: Heat-inducible transcription repressor HrcA (344 aa).

This sequence belongs to the HrcA family.

Its function is as follows. Negative regulator of class I heat shock genes (grpE-dnaK-dnaJ and groELS operons). Prevents heat-shock induction of these operons. The sequence is that of Heat-inducible transcription repressor HrcA from Geobacillus sp. (strain WCH70).